Here is a 385-residue protein sequence, read N- to C-terminus: Aryl-alcohol dehydrogenase [NADP(+)] (385 aa).

Tyr-76 serves as the catalytic Proton donor. 238–248 (NVLCAGKIRTD) contributes to the NADP(+) binding site.

This sequence belongs to the aldo/keto reductase family. Aldo/keto reductase 2 subfamily. The N-terminus is blocked.

It catalyses the reaction an aromatic primary alcohol + NADP(+) = an aromatic aldehyde + NADPH + H(+). This Phanerodontia chrysosporium (White-rot fungus) protein is Aryl-alcohol dehydrogenase [NADP(+)].